Here is a 662-residue protein sequence, read N- to C-terminus: Protein distal antenna (662 aa).

The region spanning threonine 21–leucine 72 is the HTH psq-type domain. Positions lysine 48–asparagine 68 form a DNA-binding region, H-T-H motif. Disordered regions lie at residues arginine 265 to serine 299, tyrosine 348 to threonine 407, proline 491 to valine 537, and glutamine 558 to cysteine 596. A compositionally biased stretch (low complexity) spans serine 349–proline 391. Positions phenylalanine 511–lysine 520 are enriched in polar residues. A compositionally biased stretch (acidic residues) spans valine 527–glutamate 536.

In terms of assembly, homomers. Interacts with itself, danr, ey and dac to form a complex (or complexes) containing the RD factors.

Its subcellular location is the nucleus. Probable transcription factor with a role in the retinal determination (RD) network. Contributes to differentiation of antenna-specific characteristics. This is Protein distal antenna from Culex quinquefasciatus (Southern house mosquito).